Reading from the N-terminus, the 2034-residue chain is Pecanex-like protein 3 (2034 aa).

The next 2 membrane-spanning stretches (helical) occupy residues 33–53 (CFHL…YMVL) and 54–74 (PPSL…FATI). The disordered stretch occupies residues 96–118 (STMGELEEEPAQGDSNPPRDPGV). Position 127 is a phosphoserine (Ser-127). Phosphothreonine is present on Thr-129. Disordered regions lie at residues 193–242 (IGDL…PLLK), 260–517 (DRAL…LRPP), and 540–625 (VLPA…SHSR). Positions 294 to 303 (KAGSSDSCFS) are enriched in polar residues. Positions 305 to 319 (TDRETLSSFKSEKTN) are enriched in basic and acidic residues. Asn-319 carries N-linked (GlcNAc...) asparagine glycosylation. Thr-370 is subject to Phosphothreonine. The span at 391-409 (PSKRQPPLRRHSPPGRAPR) shows a compositional bias: basic residues. Residues Ser-392 and Ser-431 each carry the phosphoserine modification. Residues 427–436 (GSELSPASSL) are compositionally biased toward polar residues. Positions 444–460 (TDSSSSTSCYSPESSRG) are enriched in low complexity. Residues 488–497 (TQRTPSTASA) show a composition bias toward polar residues. A Phosphoserine modification is found at Ser-505. Transmembrane regions (helical) follow at residues 790–812 (VLEN…LLLL), 819–836 (IWVF…YSLL), 852–872 (WVIA…IWLL), 880–900 (PFPP…FFCA), 903–923 (VATV…LPQV), 946–968 (SPLT…YGFC), and 980–1000 (HVPV…YHLS). Phosphoserine is present on Ser-1025. A run of 4 helical transmembrane segments spans residues 1053–1073 (LVMC…TVFI), 1078–1098 (VLGF…HYLL), 1244–1264 (FVLT…HAFA), and 1280–1300 (LLSG…VFIM). Ser-1697 is modified (phosphoserine). N-linked (GlcNAc...) asparagine glycosylation is present at Asn-1770. The disordered stretch occupies residues 1844–2034 (GGLTSLSNNP…AAQPLLEHQY (191 aa)). Positions 1890–1910 (RPPPLLQWPPPRLPGPPPASP) are enriched in pro residues. Position 1909 is a phosphoserine (Ser-1909). Residues 1925–1939 (GLLSSEGPSGKWSLG) show a composition bias toward low complexity. Phosphoserine is present on Ser-1955. Over residues 1969–1978 (LSLSLSLSLS) the composition is skewed to low complexity.

This sequence belongs to the pecanex family.

The protein resides in the membrane. This chain is Pecanex-like protein 3, found in Homo sapiens (Human).